The sequence spans 201 residues: Ciliary microtubule inner protein 2C (201 aa).

It belongs to the CIMIP2 family. Microtubule inner protein component of sperm flagellar doublet microtubules.

It localises to the cytoplasm. The protein resides in the cytoskeleton. Its subcellular location is the cilium axoneme. It is found in the flagellum axoneme. Its function is as follows. Microtubule inner protein (MIP) part of the dynein-decorated doublet microtubules (DMTs) in cilia axoneme, which is required for motile cilia beating. Binds to the intra-tubulin interfaces. In Bos taurus (Bovine), this protein is Ciliary microtubule inner protein 2C (CIMIP2C).